The primary structure comprises 101 residues: Small nuclear ribonucleoprotein Sm D3 (101 aa).

One can recognise a Sm domain in the interval 6 to 78 (IPVKLLNEAQ…IKFIVVPDLL (73 aa)).

The protein belongs to the snRNP core protein family. As to quaternary structure, component of the Sm core complex, present in spliceosomal snRNP U1, U2, U4/U6 and U5. The core complex contains SMB1, SMD1, SMD2, SMD3, SME1, SMX3 and SMX2 (Sm proteins B, D1, D2, D3, E, F and G, respectively), and is probably a heptameric ring structure. SMD3 specifically interacts with SMB1. Belongs to the CWC complex (or CEF1-associated complex), a spliceosome sub-complex reminiscent of a late-stage spliceosome composed of the U2, U5 and U6 snRNAs and at least BUD13, BUD31, BRR2, CDC40, CEF1, CLF1, CUS1, CWC2, CWC15, CWC21, CWC22, CWC23, CWC24, CWC25, CWC27, ECM2, HSH155, IST3, ISY1, LEA1, MSL1, NTC20, PRP8, PRP9, PRP11, PRP19, PRP21, PRP22, PRP45, PRP46, SLU7, SMB1, SMD1, SMD2, SMD3, SMX2, SMX3, SNT309, SNU114, SPP2, SYF1, SYF2, RSE1 and YJU2. Component of the U4/U6-U5 tri-snRNP complex composed of the U4, U6 and U5 snRNAs and at least PRP3, PRP4, PRP6, PRP8, PRP18, PRP31, PRP38, SNU13, SNU23, SNU66, SNU114, SPP381, SMB1, SMD1, SMD2, SMD3, SMX2, SMX3, LSM2, LSM3, LSM4, LSM5, LSM6, LSM7, LSM8, BRR2 and DIB1.

It is found in the cytoplasm. It localises to the cytosol. The protein localises to the nucleus. Functionally, plays a role in pre-mRNA splicing as a core component of the spliceosomal U1, U2, U4 and U5 small nuclear ribonucleoproteins (snRNPs), the building blocks of the spliceosome. Also binds telomerase RNA and is required for its accumulation. This chain is Small nuclear ribonucleoprotein Sm D3 (SMD3), found in Saccharomyces cerevisiae (strain ATCC 204508 / S288c) (Baker's yeast).